A 553-amino-acid chain; its full sequence is Expansin-like protein 7 (553 aa).

A signal peptide spans M1–S19. The N-linked (GlcNAc...) asparagine glycan is linked to N39. The Expansin-like EG45 domain maps to S41–P139. 2 disulfides stabilise this stretch: C44/C73 and C76/C134. N-linked (GlcNAc...) asparagine glycans are attached at residues N276, N325, and N406. Disordered regions lie at residues G421–A447 and S460–H531. Low complexity-rich tracts occupy residues S460–K476 and I484–G493. Residues A497–G516 show a composition bias toward polar residues. Residues D520–H531 are compositionally biased toward basic and acidic residues.

It belongs to the expansin family. Expansin A subfamily.

The protein resides in the secreted. Functionally, may serve to lubricate the movement of the cellulose microfibrils during cell growth and wall extension and/or may serve to maintain the fluid state of the slug cell wall. Overexpression shows aberrant stalk formation. The sequence is that of Expansin-like protein 7 (expl7) from Dictyostelium discoideum (Social amoeba).